Reading from the N-terminus, the 182-residue chain is Adenylate kinase (182 aa).

12–17 provides a ligand contact to ATP; the sequence is GAGKGT. The NMP stretch occupies residues 32–61; the sequence is STGDLLRDEVSSGSVLGIKAAEIMNKGELV. AMP contacts are provided by residues Thr-33, Arg-38, 59-61, 85-88, and Gln-92; these read ELV and GFPR. The LID stretch occupies residues 126–132; the sequence is ERGRQDD. Residue Arg-127 coordinates ATP. AMP is bound by residues Arg-129 and Arg-140. Ala-168 contributes to the ATP binding site.

It belongs to the adenylate kinase family. Monomer.

The protein resides in the cytoplasm. The enzyme catalyses AMP + ATP = 2 ADP. Its pathway is purine metabolism; AMP biosynthesis via salvage pathway; AMP from ADP: step 1/1. Its function is as follows. Catalyzes the reversible transfer of the terminal phosphate group between ATP and AMP. Plays an important role in cellular energy homeostasis and in adenine nucleotide metabolism. This is Adenylate kinase from Prochlorococcus marinus (strain NATL1A).